Here is a 1391-residue protein sequence, read N- to C-terminus: Leucine-rich PPR motif-containing protein, mitochondrial (1391 aa).

The N-terminal 42 residues, Met1–Ala42, are a transit peptide targeting the mitochondrion. PPR repeat units follow at residues Leu110–Phe144, Asp145–Pro179, Asn180–Ile214, Thr215–Pro249, Gly250–Leu284, Asn389–Val425, Ala704–Ala738, Asp741–Leu775, Thr779–Lys813, Thr815–Pro850, Arg948–Pro982, Pro1028–Met1062, Ser1063–His1093, Asn1100–Pro1134, and Arg1310–Pro1344. Residues Lys1118 to Tyr1387 are RNA-binding.

The protein resides in the mitochondrion. It is found in the nucleus. Its function is as follows. May play a role in RNA metabolism in both nuclei and mitochondria. May bind mature mRNA in the nucleus outer membrane. In mitochondria binds to poly(A) mRNA. May be involved in transcription regulation. Binds single-stranded DNA. The protein is Leucine-rich PPR motif-containing protein, mitochondrial (lrpprc) of Xenopus tropicalis (Western clawed frog).